The chain runs to 212 residues: Large ribosomal subunit protein uL3 (212 aa).

A disordered region spans residues 136–155 (THGNSVSHRVLGSTGQNQTP). Residue Q153 is modified to N5-methylglutamine.

It belongs to the universal ribosomal protein uL3 family. In terms of assembly, part of the 50S ribosomal subunit. Forms a cluster with proteins L14 and L19. Methylated by PrmB.

Its function is as follows. One of the primary rRNA binding proteins, it binds directly near the 3'-end of the 23S rRNA, where it nucleates assembly of the 50S subunit. This chain is Large ribosomal subunit protein uL3, found in Acinetobacter baumannii (strain AB307-0294).